The primary structure comprises 172 residues: Small ribosomal subunit protein uS5c (172 aa).

In terms of domain architecture, S5 DRBM spans 15–78 (WEEKVVQVKR…TDAKKHIINV (64 aa)).

This sequence belongs to the universal ribosomal protein uS5 family. Part of the 30S ribosomal subunit. Contacts protein S4.

The protein resides in the plastid. Its subcellular location is the chloroplast. With S4 and S12 plays an important role in translational accuracy. The polypeptide is Small ribosomal subunit protein uS5c (rps5) (Gracilaria tenuistipitata var. liui (Red alga)).